A 61-amino-acid chain; its full sequence is MALKITQHKGLVGANPKQRKNMAALGLKHINHSVVHQDTPVVRGMVNVVRHMVSVEEVAGE.

The protein belongs to the universal ribosomal protein uL30 family. As to quaternary structure, part of the 50S ribosomal subunit.

The polypeptide is Large ribosomal subunit protein uL30 (Corynebacterium diphtheriae (strain ATCC 700971 / NCTC 13129 / Biotype gravis)).